The following is a 621-amino-acid chain: Lamin-C (621 aa).

The tract at residues 1–47 is disordered; that stretch reads MSARRVTLNTRVSRASTSTPVGGASTSSRVGATSPTSPTRTSRQQEK. The interval 1–47 is head; it reads MSARRVTLNTRVSRASTSTPVGGASTSSRVGATSPTSPTRTSRQQEK. Polar residues predominate over residues 7 to 31; that stretch reads TLNTRVSRASTSTPVGGASTSSRVG. Over residues 33–42 the composition is skewed to low complexity; it reads TSPTSPTRTS. Ser34 carries the post-translational modification Phosphoserine. In terms of domain architecture, IF rod spans 46 to 402; sequence EKEELQHLND…KLLCGEERRL (357 aa). The interval 47–85 is coil 1A; sequence KEELQHLNDRLACYIDRMRNLENENSRLTQELNLAQDTV. Residues 86-95 form a linker 1 region; the sequence is NRETSNLKAV. The interval 96-233 is coil 1B; the sequence is YEKELAAARK…QVHTQELTET (138 aa). Residues 234-257 form a linker 2 region; it reads RSRRQIEISEIDGRLSRQYEAKLQ. The coil 2 stretch occupies residues 258 to 403; sequence QSLQELRDQY…LLCGEERRLN (146 aa). Positions 404-458 are disordered; it reads IESPGRPTTDSGISSNGSHLTASASSRSGRVTPSGRRSATPGISGSSAVKRRRTV. A tail region spans residues 404–621; that stretch reads IESPGRPTTD…GVRSLFSLLF (218 aa). Phosphoserine is present on residues Ser406 and Ser441. Residues 409 to 450 are compositionally biased toward polar residues; sequence RPTTDSGISSNGSHLTASASSRSGRVTPSGRRSATPGISGSS. Thr443 bears the Phosphothreonine mark. The short motif at 453 to 458 is the Nuclear localization signal element; the sequence is KRRRTV. The region spanning 468-582 is the LTD domain; it reads SEYSVNAAAK…EDVASYDRVR (115 aa). A disordered region spans residues 585–605; the sequence is VSSHTSRHRSSGTPSTGFTLG.

This sequence belongs to the intermediate filament family. As to quaternary structure, interacts with MAN1. In terms of tissue distribution, first detected from late stage 12 in the oenocytes, abdominal segments, hindgut and posterior spiracles, with expression increasing in stage 13 (at protein level). In stage 14, also becomes detectable in the foregut (at protein level). Stage 15 shows expression in the epidermis, dorsal longitudinal trunk, pharynx, esophagus and proventriculus, with the dorsal pharyngeal musculature showing expression in late stage 15 (at protein level). In stage 16 embryos, also detected in the exit glia with increasing expression in the somatic musculature (at protein level). Also detected in the visceral mesoderm but not in the midgut or central nervous system until the end of embryogenesis (at protein level). In third instar larvae, detectable at varying levels in all cell types (at protein level). Expressed in spermatocytes (at protein level).

The protein resides in the nucleus. It localises to the nucleus lamina. Lamins are components of the nuclear lamina, a fibrous layer on the nucleoplasmic side of the inner nuclear membrane, which is thought to provide a framework for the nuclear envelope and may also interact with chromatin. In spermatocytes, regulates cytokinesis during meiosis. This is Lamin-C (LamC) from Drosophila melanogaster (Fruit fly).